Consider the following 2590-residue polypeptide: DNA polymerase theta (2590 aa).

Basic residues predominate over residues 1–12 (MNLLRRSGKRRR). Positions 1-33 (MNLLRRSGKRRRSESGSDSFSGSGGDSSASPQF) are disordered. Residues 16–30 (GSDSFSGSGGDSSAS) are compositionally biased toward low complexity. ATP is bound by residues Gln-96 and 115 to 122 (APTSAGKT). One can recognise a Helicase ATP-binding domain in the interval 102–286 (LGQVLEGKNL…WLNAELYHTD (185 aa)). The interval 102-554 (LGQVLEGKNL…STSQDMHTYA (453 aa)) is helicase activity. The DEAH box motif lies at 216-219 (DELH). Residues 321–554 (GDEDHVVSLC…STSQDMHTYA (234 aa)) enclose the Helicase C-terminal domain. The segment at 847 to 894 (DEEEEAVEERRNMRTIWVTGRKGLTEREAAALIVEEARMILQQDLVEM) is interaction with RAD51. Lys-990 is modified (N6-acetyllysine). The disordered stretch occupies residues 1034–1060 (KMSRSFRSWKRRKHLKRSRDSSPLKDS). A compositionally biased stretch (basic residues) spans 1040–1050 (RSWKRRKHLKR). Ser-1289, Ser-1482, Ser-1486, Ser-1488, Ser-1493, Ser-1555, and Ser-1563 each carry phosphoserine; by PLK1. The interval 1594–1622 (SDPVLDEHHQGDQDGGDQDERAEKSKLTG) is disordered. Over residues 1598-1619 (LDEHHQGDQDGGDQDERAEKSK) the composition is skewed to basic and acidic residues. A phosphoserine; by PLK1 mark is found at Ser-1628 and Ser-1635. Position 1755 is a phosphothreonine; by PLK1 (Thr-1755). The interval 1777–1797 (PSDIKNHDLSPGSRNGFKDNS) is disordered. A DNA polymerase activity region spans residues 2097 to 2584 (AECESQKHIM…KVKIGASWGE (488 aa)). Loop stretches follow at residues 2142–2177 (KLPP…GRQF) and 2257–2322 (EIKM…VPFP). Positions 2330 and 2331 each coordinate Mg(2+). The tract at residues 2491–2535 (QLETFHSTFKSHGHREGMLQSDQTGLSRKRKLQGMFCPIRGGFFI) is loop 3. Asp-2540 provides a ligand contact to Mg(2+).

It belongs to the DNA polymerase type-A family. In terms of assembly, homomultimer; forms homodimers and homotetramers. Interacts with RAD51. Interacts with ORC2 and ORC4. Interacts with RHNO1; interaction takes place during mitosis and promotes POLQ recruitment to DNA damage sites. Interacts (when phosphorylated) with TOPBP1 (via BRCT domains 7 and 8); promoting POLQ recruitment to DNA damage sites. The cofactor is Mg(2+). In terms of processing, phosphorylated by PLK1; promoting interaction with TOPBP1 and recruitment to DNA damage sites. In terms of tissue distribution, highly expressed in testis.

Its subcellular location is the nucleus. It localises to the chromosome. It catalyses the reaction DNA(n) + a 2'-deoxyribonucleoside 5'-triphosphate = DNA(n+1) + diphosphate. It carries out the reaction ATP + H2O = ADP + phosphate + H(+). Specifically inhibited by the antibiotic novobiocin. The polymerase activity is specifically inhibited by the small molecule ART558. Novobiocin and ART558 confer specific killing of BRCA1/2-deficient cells and synergize with the poly [ADP-ribose] polymerase (PARP) inhibitor olaparib. In terms of biological role, low-fidelity DNA polymerase with a helicase activity that promotes microhomology-mediated end-joining (MMEJ), an alternative non-homologous end-joining (NHEJ) machinery required to repair double-strand breaks in DNA during mitosis. MMEJ is an error-prone repair pathway that produces deletions of sequences from the strand being repaired and promotes genomic rearrangements, such as telomere fusions, some of them leading to cellular transformation. MMEJ is required during mitosis to repair persistent double-strand breaks that originate in S-phase. Although error-prone, MMEJ protects against chromosomal instability and tumorigenesis. The polymerase acts by binding directly the 2 ends of resected double-strand breaks, allowing microhomologous sequences in the overhangs to form base pairs. It then extends each strand from the base-paired region using the opposing overhang as a template. Requires partially resected DNA containing 2 to 6 base pairs of microhomology to perform MMEJ. The polymerase lacks proofreading activity and is highly promiscuous: unlike most polymerases, promotes extension of ssDNA and partial ssDNA (pssDNA) substrates. When the ends of a break do not contain terminal microhomology must identify embedded complementary sequences through a scanning step. Also acts as a DNA helicase, promoting dissociation of the replication protein A complex (RPA/RP-A), composed of RPA1, RPA2 and RPA3, from resected double-strand breaks to allow their annealing and subsequent joining by MMEJ. Removal of RPA/RP-A complex proteins prevents RAD51 accumulation at resected ends, thereby inhibiting homology-recombination repair (HR) pathway. Also shows RNA-directed DNA polymerase activity to mediate DNA repair in vitro; however this activity needs additional evidence in vivo. May also have lyase activity. Involved in somatic hypermutation of immunoglobulin genes, a process that requires the activity of DNA polymerases to ultimately introduce mutations at both A/T and C/G base pairs. POLQ-mediated end joining activity is involved in random integration of exogenous DNA hampers. In Homo sapiens (Human), this protein is DNA polymerase theta.